Consider the following 545-residue polypeptide: 2-succinyl-5-enolpyruvyl-6-hydroxy-3-cyclohexene-1-carboxylate synthase (545 aa).

Positions 170–185 (QVSGLQRSAPAPSSDS) are enriched in polar residues. The tract at residues 170-193 (QVSGLQRSAPAPSSDSPLGAAPQL) is disordered.

This sequence belongs to the TPP enzyme family. MenD subfamily. In terms of assembly, homodimer. Mg(2+) serves as cofactor. It depends on Mn(2+) as a cofactor. Requires thiamine diphosphate as cofactor.

The catalysed reaction is isochorismate + 2-oxoglutarate + H(+) = 5-enolpyruvoyl-6-hydroxy-2-succinyl-cyclohex-3-ene-1-carboxylate + CO2. The protein operates within quinol/quinone metabolism; 1,4-dihydroxy-2-naphthoate biosynthesis; 1,4-dihydroxy-2-naphthoate from chorismate: step 2/7. It functions in the pathway cofactor biosynthesis; phylloquinone biosynthesis. In terms of biological role, catalyzes the thiamine diphosphate-dependent decarboxylation of 2-oxoglutarate and the subsequent addition of the resulting succinic semialdehyde-thiamine pyrophosphate anion to isochorismate to yield 2-succinyl-5-enolpyruvyl-6-hydroxy-3-cyclohexene-1-carboxylate (SEPHCHC). The protein is 2-succinyl-5-enolpyruvyl-6-hydroxy-3-cyclohexene-1-carboxylate synthase of Parasynechococcus marenigrum (strain WH8102).